The sequence spans 181 residues: Adenine phosphoribosyltransferase (181 aa).

The protein belongs to the purine/pyrimidine phosphoribosyltransferase family. Homodimer.

It is found in the cytoplasm. The catalysed reaction is AMP + diphosphate = 5-phospho-alpha-D-ribose 1-diphosphate + adenine. It functions in the pathway purine metabolism; AMP biosynthesis via salvage pathway; AMP from adenine: step 1/1. Its function is as follows. Catalyzes a salvage reaction resulting in the formation of AMP, that is energically less costly than de novo synthesis. The protein is Adenine phosphoribosyltransferase of Chromohalobacter salexigens (strain ATCC BAA-138 / DSM 3043 / CIP 106854 / NCIMB 13768 / 1H11).